The following is a 227-amino-acid chain: Biosynthetic peptidoglycan transglycosylase (227 aa).

The helical transmembrane segment at 7 to 27 (VALLTLLLLVAAPYVLTLVYG) threads the bilayer.

This sequence belongs to the glycosyltransferase 51 family.

It localises to the cell inner membrane. The catalysed reaction is [GlcNAc-(1-&gt;4)-Mur2Ac(oyl-L-Ala-gamma-D-Glu-L-Lys-D-Ala-D-Ala)](n)-di-trans,octa-cis-undecaprenyl diphosphate + beta-D-GlcNAc-(1-&gt;4)-Mur2Ac(oyl-L-Ala-gamma-D-Glu-L-Lys-D-Ala-D-Ala)-di-trans,octa-cis-undecaprenyl diphosphate = [GlcNAc-(1-&gt;4)-Mur2Ac(oyl-L-Ala-gamma-D-Glu-L-Lys-D-Ala-D-Ala)](n+1)-di-trans,octa-cis-undecaprenyl diphosphate + di-trans,octa-cis-undecaprenyl diphosphate + H(+). It functions in the pathway cell wall biogenesis; peptidoglycan biosynthesis. Its function is as follows. Peptidoglycan polymerase that catalyzes glycan chain elongation from lipid-linked precursors. In Rhodopseudomonas palustris (strain HaA2), this protein is Biosynthetic peptidoglycan transglycosylase.